The chain runs to 488 residues: Alpha-ketoglutaric semialdehyde dehydrogenase (488 aa).

NAD(+) is bound by residues Lys180 and 233–238 (GSNQVG). The active-site Proton acceptor is Glu255. Cys289 acts as the Nucleophile in catalysis. Residues Gln336 and Glu390 each contribute to the NAD(+) site.

The protein belongs to the aldehyde dehydrogenase family. In terms of assembly, homotetramer.

The enzyme catalyses 2,5-dioxopentanoate + NADP(+) + H2O = 2-oxoglutarate + NADPH + 2 H(+). It catalyses the reaction 2,5-dioxopentanoate + NAD(+) + H2O = 2-oxoglutarate + NADH + 2 H(+). Functionally, catalyzes the NAD(P)(+)-dependent oxidation of alpha-ketoglutaric semialdehyde (alphaKGSA) to alpha-ketoglutarate. Prefers NADP(+) to NAD(+) as a cosubstrate. In vitro, can also use various aldehydes. This chain is Alpha-ketoglutaric semialdehyde dehydrogenase, found in Bacillus subtilis (strain 168).